The following is a 466-amino-acid chain: Argininosuccinate lyase 1 (466 aa).

Belongs to the lyase 1 family. Argininosuccinate lyase subfamily.

It is found in the cytoplasm. The catalysed reaction is 2-(N(omega)-L-arginino)succinate = fumarate + L-arginine. The protein operates within amino-acid biosynthesis; L-arginine biosynthesis; L-arginine from L-ornithine and carbamoyl phosphate: step 3/3. This Mesorhizobium japonicum (strain LMG 29417 / CECT 9101 / MAFF 303099) (Mesorhizobium loti (strain MAFF 303099)) protein is Argininosuccinate lyase 1.